The primary structure comprises 250 residues: uncharacterized protein (250 aa).

An N-terminal signal peptide occupies residues 1-24 (MKGFLKPNFSLGALFLTLSPIATA). The N-palmitoyl cysteine moiety is linked to residue Cys25. Cys25 carries the S-diacylglycerol cysteine lipid modification. Positions 44–200 (RLRKARVNHW…FNNRKNIFSY (157 aa)) constitute a TNase-like domain.

It localises to the cell membrane. This is an uncharacterized protein from Mycoplasma genitalium (strain ATCC 33530 / DSM 19775 / NCTC 10195 / G37) (Mycoplasmoides genitalium).